A 191-amino-acid polypeptide reads, in one-letter code: Ion-translocating oxidoreductase complex subunit B (191 aa).

A hydrophobic region spans residues 1–26 (MSSLWIAIAAVSAIALVSGLILGFAA). Residues 32-90 (EADPIVERIDALLPQSQCGQCGYPGCRPYAEAVANGEKINRCAPGGEAVMRNIAALLAV) enclose the 4Fe-4S domain. [4Fe-4S] cluster-binding residues include Cys-49, Cys-52, Cys-57, Cys-73, Cys-116, Cys-119, Cys-122, Cys-126, Cys-146, Cys-149, Cys-152, and Cys-156. 4Fe-4S ferredoxin-type domains are found at residues 107-136 (QVAL…GATR) and 137-166 (ALHT…LVPV).

The protein belongs to the 4Fe4S bacterial-type ferredoxin family. RnfB subfamily. The complex is composed of six subunits: RnfA, RnfB, RnfC, RnfD, RnfE and RnfG. It depends on [4Fe-4S] cluster as a cofactor.

It localises to the cell inner membrane. Functionally, part of a membrane-bound complex that couples electron transfer with translocation of ions across the membrane. This chain is Ion-translocating oxidoreductase complex subunit B, found in Edwardsiella ictaluri (strain 93-146).